We begin with the raw amino-acid sequence, 92 residues long: Small ribosomal subunit protein uS19 (92 aa).

Belongs to the universal ribosomal protein uS19 family.

In terms of biological role, protein S19 forms a complex with S13 that binds strongly to the 16S ribosomal RNA. This Chromobacterium violaceum (strain ATCC 12472 / DSM 30191 / JCM 1249 / CCUG 213 / NBRC 12614 / NCIMB 9131 / NCTC 9757 / MK) protein is Small ribosomal subunit protein uS19.